The primary structure comprises 687 residues: Mediator of RNA polymerase II transcription subunit 17 (687 aa).

Over residues 30 to 43 the composition is skewed to low complexity; the sequence is LSSNPNSSLHSPTS. Disordered stretches follow at residues 30–70 and 130–189; these read LSSN…NKTK and QLGS…ETDD. 3 stretches are compositionally biased toward basic and acidic residues: residues 56-70, 136-147, and 167-183; these read TSIR…NKTK, SDGHNSEKKDTD, and KDNP…KTNE.

It belongs to the Mediator complex subunit 17 family. As to quaternary structure, component of the Mediator complex, which is composed of at least 21 subunits that form three structurally distinct submodules. The Mediator head module contains MED6, MED8, MED11, SRB4/MED17, SRB5/MED18, ROX3/MED19, SRB2/MED20 and SRB6/MED22, the middle module contains MED1, MED4, NUT1/MED5, MED7, CSE2/MED9, NUT2/MED10, SRB7/MED21 and SOH1/MED31, and the tail module contains MED2, PGD1/MED3, RGR1/MED14, GAL11/MED15 and SIN4/MED16. The head and the middle modules interact directly with RNA polymerase II, whereas the elongated tail module interacts with gene-specific regulatory proteins. The head module may also interact with the TFIIF complex. SRB4/MED17 interacts directly with MED6, MED11, ROX3/MED19, SRB2/MED20 and SRB6/MED22. Interacts directly with the activator GAL4.

It localises to the nucleus. Its function is as follows. Component of the Mediator complex, a coactivator involved in the regulated transcription of nearly all RNA polymerase II-dependent genes. Mediator functions as a bridge to convey information from gene-specific regulatory proteins to the basal RNA polymerase II transcription machinery. The Mediator complex, having a compact conformation in its free form, is recruited to promoters by direct interactions with regulatory proteins and serves for the assembly of a functional preinitiation complex with RNA polymerase II and the general transcription factors. The Mediator complex unfolds to an extended conformation and partially surrounds RNA polymerase II, specifically interacting with the unphosphorylated form of the C-terminal domain (CTD) of RNA polymerase II. The Mediator complex dissociates from the RNA polymerase II holoenzyme and stays at the promoter when transcriptional elongation begins. The polypeptide is Mediator of RNA polymerase II transcription subunit 17 (SRB4) (Saccharomyces cerevisiae (strain ATCC 204508 / S288c) (Baker's yeast)).